We begin with the raw amino-acid sequence, 441 residues long: Carbohydrate sulfotransferase 3 (441 aa).

Topologically, residues Met1 to Arg4 are cytoplasmic. Residues Ser5 to Glu21 form a helical; Signal-anchor for type II membrane protein membrane-spanning segment. Topologically, residues Lys22 to Thr441 are lumenal. N-linked (GlcNAc...) asparagine glycans are attached at residues Asn47 and Asn58. A 3'-phosphoadenylyl sulfate-binding site is contributed by Thr106–Phe112. Asn221 carries an N-linked (GlcNAc...) asparagine glycan. Arg266–Ser274 contacts 3'-phosphoadenylyl sulfate. The N-linked (GlcNAc...) asparagine glycan is linked to Asn427.

This sequence belongs to the sulfotransferase 1 family. Gal/GlcNAc/GalNAc subfamily. In terms of processing, N-glycosylated. In terms of tissue distribution, in electric organ, it is moderately expressed in spinal cord and electric lobe and undetectable in non-neural tissues. Expressed in a punctate distribution in the innervated portion of electrocytes. In the CNS, it is localized within the somas of motor neurons and neurons of the electromotor nucleus.

It is found in the golgi apparatus membrane. It catalyses the reaction chondroitin beta-D-glucuronate + n 3'-phosphoadenylyl sulfate = chondroitin 6'-sulfate + n adenosine 3',5'-bisphosphate + n H(+). The catalysed reaction is 3'-phosphoadenylyl sulfate + keratan = adenosine 3',5'-bisphosphate + keratan 6'-sulfate.. Sulfotransferase that utilizes 3'-phospho-5'-adenylyl sulfate (PAPS) as sulfonate donor to catalyze the transfer of sulfate to position 6 of the N-acetylgalactosamine (GalNAc) residue of chondroitin. Chondroitin sulfate constitutes the predominant proteoglycan present in cartilage and is distributed on the surfaces of many cells and extracellular matrices. Catalyzes with a lower efficiency the sulfation of Gal residues of keratan sulfate, another glycosaminoglycan. Can also catalyze the sulfation of the Gal residues in sialyl N-acetyllactosamine (sialyl LacNAc) oligosaccharides. This is Carbohydrate sulfotransferase 3 (CHST3) from Tetronarce californica (Pacific electric ray).